Here is a 270-residue protein sequence, read N- to C-terminus: Putative pyruvate, phosphate dikinase regulatory protein 2 (270 aa).

151–158 (GVSRTSKT) provides a ligand contact to ADP.

This sequence belongs to the pyruvate, phosphate/water dikinase regulatory protein family. PDRP subfamily.

It catalyses the reaction N(tele)-phospho-L-histidyl/L-threonyl-[pyruvate, phosphate dikinase] + ADP = N(tele)-phospho-L-histidyl/O-phospho-L-threonyl-[pyruvate, phosphate dikinase] + AMP + H(+). The catalysed reaction is N(tele)-phospho-L-histidyl/O-phospho-L-threonyl-[pyruvate, phosphate dikinase] + phosphate + H(+) = N(tele)-phospho-L-histidyl/L-threonyl-[pyruvate, phosphate dikinase] + diphosphate. Functionally, bifunctional serine/threonine kinase and phosphorylase involved in the regulation of the pyruvate, phosphate dikinase (PPDK) by catalyzing its phosphorylation/dephosphorylation. This chain is Putative pyruvate, phosphate dikinase regulatory protein 2, found in Listeria innocua serovar 6a (strain ATCC BAA-680 / CLIP 11262).